A 120-amino-acid polypeptide reads, in one-letter code: Ribonuclease P protein component (120 aa).

Belongs to the RnpA family. As to quaternary structure, consists of a catalytic RNA component (M1 or rnpB) and a protein subunit.

The catalysed reaction is Endonucleolytic cleavage of RNA, removing 5'-extranucleotides from tRNA precursor.. Its function is as follows. RNaseP catalyzes the removal of the 5'-leader sequence from pre-tRNA to produce the mature 5'-terminus. It can also cleave other RNA substrates such as 4.5S RNA. The protein component plays an auxiliary but essential role in vivo by binding to the 5'-leader sequence and broadening the substrate specificity of the ribozyme. This Dehalococcoides mccartyi (strain CBDB1) protein is Ribonuclease P protein component.